A 368-amino-acid chain; its full sequence is Propane 2-monooxygenase, hydroxylase component small subunit (368 aa).

Positions 1–33 (MSAPAQPRERSFPSIEFTDAEADAREFPSSRSR) are disordered.

This sequence belongs to the TmoE/XamoE family. As to quaternary structure, the propane 2-monooxygenase multicomponent enzyme system is composed of an electron transfer component and a monooxygenase component interacting with the effector protein PrmD. The electron transfer component is composed of a reductase (PrmB), and the monooxygenase component is formed by a large subunit (PrmA) and a small subunit (PrmC). Probably requires the presence of the chaperonin-like protein PrmG to ensure a productive folding, resulting of a soluble PrmC, which leads to the active form of PrmABCD.

The enzyme catalyses propane + NADH + O2 + H(+) = propan-2-ol + NAD(+) + H2O. It carries out the reaction phenol + NADH + O2 + H(+) = hydroquinone + NAD(+) + H2O. Component of the propane 2-monooxygenase multicomponent enzyme system which is involved in the degradation of propane via the O2-dependent hydroxylation of propane. Under acetone induction, also able to catalyze the oxidation of phenol to yield hydroquinone. The polypeptide is Propane 2-monooxygenase, hydroxylase component small subunit (Gordonia sp. (strain TY-5)).